The primary structure comprises 84 residues: Small ribosomal subunit protein bS18B (84 aa).

The protein belongs to the bacterial ribosomal protein bS18 family. Part of the 30S ribosomal subunit. Forms a tight heterodimer with protein bS6.

In terms of biological role, binds as a heterodimer with protein bS6 to the central domain of the 16S rRNA, where it helps stabilize the platform of the 30S subunit. The protein is Small ribosomal subunit protein bS18B of Mycolicibacterium smegmatis (strain ATCC 700084 / mc(2)155) (Mycobacterium smegmatis).